We begin with the raw amino-acid sequence, 185 residues long: NAD(P)H-dependent FMN reductase PA1204 (185 aa).

FMN contacts are provided by residues 13–20 (SLRSGSYN) and 81–83 (YNY). Residue 115 to 122 (SAGRFGTA) participates in NAD(+) binding.

This sequence belongs to the SsuE family. Homodimer. It depends on FMN as a cofactor.

Has NAD(P)H-dependent FMN reductase activity. The protein is NAD(P)H-dependent FMN reductase PA1204 of Pseudomonas aeruginosa (strain ATCC 15692 / DSM 22644 / CIP 104116 / JCM 14847 / LMG 12228 / 1C / PRS 101 / PAO1).